The sequence spans 132 residues: Large ribosomal subunit protein bL17 (132 aa).

Belongs to the bacterial ribosomal protein bL17 family. In terms of assembly, part of the 50S ribosomal subunit. Contacts protein L32.

In Shewanella sediminis (strain HAW-EB3), this protein is Large ribosomal subunit protein bL17.